The sequence spans 610 residues: Pentatricopeptide repeat-containing protein At3g15590, mitochondrial (610 aa).

The transit peptide at 1–71 (MYSLSRILQR…FSRFFGIHKL (71 aa)) directs the protein to the mitochondrion. The tract at residues 88-142 (EELSESEEAVPVSGDVPEGVVDDDSLFEPELGSDNDDLEIEEKHSKDGGKPTKKR) is disordered. Over residues 107–127 (VVDDDSLFEPELGSDNDDLEI) the composition is skewed to acidic residues. Basic and acidic residues predominate over residues 128–137 (EEKHSKDGGK). PPR repeat units lie at residues 241–275 (GEVVYRTLLANCVLKHHVNKAEDIFNKMKELKFPT), 276–309 (SVFACNQLLLLYSMHDRKKISDVLLLMERENIKP), 310–344 (SRATYHFLINSKGLAGDITGMEKIVETIKEEGIEL), 345–379 (DPELQSILAKYYIRAGLKERAQDLMKEIEGKGLQQ), 380–410 (TPWVCRSLLPLYADIGDSDNVRRLSRFVDQN), 412–442 (RYDNCISAIKAWGKLKEVEEAEAVFERLVEK), 447–481 (PMMPYFALMEIYTENKMLAKGRDLVKRMGNAGIAI), 482–517 (GPSTWHALVKLYIKAGEVGKAELILNRATKDNKMRP), and 518–552 (MFTTYMAILEEYAKRGDVHNTEKVFMKMKRASYAA).

The protein belongs to the PPR family. P subfamily.

It is found in the mitochondrion. The sequence is that of Pentatricopeptide repeat-containing protein At3g15590, mitochondrial from Arabidopsis thaliana (Mouse-ear cress).